A 350-amino-acid polypeptide reads, in one-letter code: Putative transport protein YdbI (350 aa).

Helical transmembrane passes span 18-38, 67-87, 145-165, 207-227, 229-249, 257-277, 289-309, and 311-331; these read IFVV…LILL, VVIT…GFVF, ISTF…FLFE, FIIA…MHFP, LFGL…GVVI, IAYS…IFAI, LMSA…IFSE, and FFGI…LDIL.

It belongs to the autoinducer-2 exporter (AI-2E) (TC 2.A.86) family.

It localises to the cell membrane. This is Putative transport protein YdbI (ydbI) from Bacillus subtilis (strain 168).